The sequence spans 123 residues: Ribosome-binding factor A (123 aa).

The protein belongs to the RbfA family. Monomer. Binds 30S ribosomal subunits, but not 50S ribosomal subunits or 70S ribosomes.

Its subcellular location is the cytoplasm. One of several proteins that assist in the late maturation steps of the functional core of the 30S ribosomal subunit. Associates with free 30S ribosomal subunits (but not with 30S subunits that are part of 70S ribosomes or polysomes). Required for efficient processing of 16S rRNA. May interact with the 5'-terminal helix region of 16S rRNA. The chain is Ribosome-binding factor A from Koribacter versatilis (strain Ellin345).